The primary structure comprises 73 residues: Arabinogalactan protein 16 (73 aa).

Residues 1–26 (MASRNSVTGFALFSFVFAVILSLAGA) form the signal peptide. At Q27 the chain carries Pyrrolidone carboxylic acid. 4-hydroxyproline occurs at positions 31, 33, and 35. P31, P33, and P35 each carry an O-linked (Ara...) hydroxyproline glycan. S37 is lipidated: GPI-anchor amidated serine. Positions 38–73 (DGTSIDQGIAYLLMVVALVLTYLIHPLDASSSYSFF) are cleaved as a propeptide — removed in mature form.

This sequence belongs to the AG-peptide AGP family. In terms of processing, contains 4-hydroxyproline; hydroxylated on Pro-31, Pro-33 and Pro-35. Post-translationally, O-glycosylated on hydroxyprolines; noncontiguous hydroxylproline residues are glycosylated with arabinogalactan. As to expression, predominantly expressed in flowers.

The protein localises to the cell membrane. In terms of biological role, proteoglycan that seems to be implicated in diverse developmental roles such as differentiation, cell-cell recognition, embryogenesis and programmed cell death. This is Arabinogalactan protein 16 from Arabidopsis thaliana (Mouse-ear cress).